Here is a 131-residue protein sequence, read N- to C-terminus: Small ribosomal subunit protein uS8 (131 aa).

The protein belongs to the universal ribosomal protein uS8 family. In terms of assembly, part of the 30S ribosomal subunit. Contacts proteins S5 and S12.

One of the primary rRNA binding proteins, it binds directly to 16S rRNA central domain where it helps coordinate assembly of the platform of the 30S subunit. The protein is Small ribosomal subunit protein uS8 of Solibacter usitatus (strain Ellin6076).